Reading from the N-terminus, the 110-residue chain is Large ribosomal subunit protein uL22 (110 aa).

The protein belongs to the universal ribosomal protein uL22 family. As to quaternary structure, part of the 50S ribosomal subunit.

Functionally, this protein binds specifically to 23S rRNA; its binding is stimulated by other ribosomal proteins, e.g. L4, L17, and L20. It is important during the early stages of 50S assembly. It makes multiple contacts with different domains of the 23S rRNA in the assembled 50S subunit and ribosome. In terms of biological role, the globular domain of the protein is located near the polypeptide exit tunnel on the outside of the subunit, while an extended beta-hairpin is found that lines the wall of the exit tunnel in the center of the 70S ribosome. In Shewanella frigidimarina (strain NCIMB 400), this protein is Large ribosomal subunit protein uL22.